A 91-amino-acid chain; its full sequence is Putative septation protein SpoVG (91 aa).

It belongs to the SpoVG family.

Could be involved in septation. The sequence is that of Putative septation protein SpoVG from Caldanaerobacter subterraneus subsp. tengcongensis (strain DSM 15242 / JCM 11007 / NBRC 100824 / MB4) (Thermoanaerobacter tengcongensis).